The sequence spans 545 residues: Squalene monooxygenase SE2 (545 aa).

The chain crosses the membrane as a helical span at residues 12–32; sequence EYFLMFAATLLFGFVLYLFTL. Residues 86 to 87, 106 to 107, R114, R185, V201, D364, and M377 each bind FAD; these read VA and ER. Helical transmembrane passes span 475 to 495 and 500 to 520; these read LFFHFFAVAIYGVGRLLIPFP and MWLGARLISGASGIIFPIIKS.

Belongs to the squalene monooxygenase family. Requires FAD as cofactor. In terms of tissue distribution, weak expression in petioles and flower buds and barely detectable in roots and leaves. In petioles, preferentially observed in vascular bundle tissue (phloem cells and parenchymatous cells near xylem) and resin ducts.

It is found in the membrane. It carries out the reaction squalene + reduced [NADPH--hemoprotein reductase] + O2 = (S)-2,3-epoxysqualene + oxidized [NADPH--hemoprotein reductase] + H2O + H(+). The protein operates within terpene metabolism; lanosterol biosynthesis; lanosterol from farnesyl diphosphate: step 2/3. Functionally, component of the triterpene saponins (e.g. ginsenosides or panaxosides) and phytosterols biosynthetic pathways. Catalyzes the first oxygenation step in sterol biosynthesis and is suggested to be one of the rate-limiting enzymes in this pathway. This chain is Squalene monooxygenase SE2, found in Panax ginseng (Korean ginseng).